The following is a 141-amino-acid chain: Galactose-6-phosphate isomerase subunit LacA (141 aa).

The protein belongs to the LacAB/RpiB family. In terms of assembly, heteromultimeric protein consisting of LacA and LacB.

It carries out the reaction aldehydo-D-galactose 6-phosphate = keto-D-tagatose 6-phosphate. It participates in carbohydrate metabolism; D-galactose 6-phosphate degradation; D-tagatose 6-phosphate from D-galactose 6-phosphate: step 1/1. In Streptococcus pneumoniae serotype 2 (strain D39 / NCTC 7466), this protein is Galactose-6-phosphate isomerase subunit LacA.